We begin with the raw amino-acid sequence, 384 residues long: 5-amino-6-(D-ribitylamino)uracil--L-tyrosine 4-hydroxyphenyl transferase 2 (384 aa).

Positions 53-286 (VSYVVNRNIY…IAISRVILHT (234 aa)) constitute a Radical SAM core domain. Residues C67, C71, and C74 each contribute to the [4Fe-4S] cluster site.

The protein belongs to the radical SAM superfamily. CofH family. In terms of assembly, consists of two subunits, CofG and CofH. [4Fe-4S] cluster serves as cofactor.

It carries out the reaction 5-amino-6-(D-ribitylamino)uracil + L-tyrosine + S-adenosyl-L-methionine = 5-amino-5-(4-hydroxybenzyl)-6-(D-ribitylimino)-5,6-dihydrouracil + 2-iminoacetate + 5'-deoxyadenosine + L-methionine + H(+). The protein operates within cofactor biosynthesis; coenzyme F0 biosynthesis. Catalyzes the radical-mediated synthesis of 5-amino-5-(4-hydroxybenzyl)-6-(D-ribitylimino)-5,6-dihydrouracil from 5-amino-6-(D-ribitylamino)uracil and L-tyrosine. In Methanosarcina barkeri (strain Fusaro / DSM 804), this protein is 5-amino-6-(D-ribitylamino)uracil--L-tyrosine 4-hydroxyphenyl transferase 2.